The sequence spans 637 residues: Protein arginine N-methyltransferase 5 (637 aa).

At Ala-2 the chain carries N-acetylalanine. The TIM barrel stretch occupies residues 13–292; sequence RVSSGRDLNC…YLEYLSQNRP (280 aa). The 308-residue stretch at 308–615 folds into the SAM-dependent MTase PRMT-type domain; it reads LQSPLQPLMD…SNSKKVWYEW (308 aa). Tyr-324 is a binding site for S-adenosyl-L-methionine. Phe-327 contributes to the a protein binding site. S-adenosyl-L-methionine contacts are provided by residues 333–334, Glu-392, and 419–420; these read KY and DM. Positions 435 and 444 each coordinate a protein. Residues Glu-435 and Glu-444 each act as proton donor/acceptor in the active site. The interval 465 to 637 is beta barrel; the sequence is PGEYTSFLAP…PTGRSYTIGL (173 aa). The dimerization stretch occupies residues 488-494; it reads REKDRDP.

It belongs to the class I-like SAM-binding methyltransferase superfamily. Protein arginine N-methyltransferase family. In terms of assembly, forms, at least, homodimers and homotetramers. Component of the methylosome complex, composed of PRMT5, WDR77 and CLNS1A. Found in a complex composed of PRMT5, WDR77 and RIOK1. RIOK1 and CLNS1A associate with PRMT5 in a mutually exclusive fashion, which allows the recruitment of distinct methylation substrates, such as nucleolin/NCL and Sm proteins, respectively. Interacts with PRDM1. Identified in a complex composed of methylosome and PRMT1 and ERH. Interacts with EGFR; methylates EGFR and stimulates EGFR-mediated ERK activation. Interacts with HOXA9. Interacts with SRGAP2. Found in a complex with COPRS, RUNX1 and CBFB. Interacts with CHTOP; the interaction symmetrically methylates CHTOP, but seems to require the presence of PRMT1. Interacts with EPB41L3; this modulates methylation of target proteins. Component of a high molecular weight E2F-pocket protein complex, CERC (cyclin E1 repressor complex). Associates with SWI/SNF remodeling complexes containing SMARCA2 and SMARCA4. Interacts with JAK2, SSTR1, SUPT5H, BRAF and with active RAF1. Interacts with LSM11, PRMT7 and SNRPD3. Interacts with COPRS; promoting its recruitment on histone H4. Interacts with CLNS1A/pICln. Identified in a complex with CLNS1A/pICln and Sm proteins. Interacts with RPS10. Interacts with WDR77. Interacts with IWS1. Interacts with CRY1. Interacts with POLR2A. Interacts with SMN1/SMN2. Interacts with LYAR; this interaction is direct. Interacts with TTC5/STRAP; this interaction is DNA damage-dependent and promotes PRMT5 interaction with p53/TP53. Interacts with p53/TP53 in response to DNA damage; the interaction is TTC5/STRAP dependent. Interacts with FAM47E; the interaction is direct, promotes PRMT5 localization to chromatin, and does not disrupt its association with WDR77 or STUB1. Interacts with TDRD6. Interacts with STUB1. Interacts with MBD2. Does not interact with MBD3.

The protein resides in the cytoplasm. Its subcellular location is the nucleus. It is found in the golgi apparatus. It carries out the reaction L-arginyl-[protein] + 2 S-adenosyl-L-methionine = N(omega),N(omega)'-dimethyl-L-arginyl-[protein] + 2 S-adenosyl-L-homocysteine + 2 H(+). Activity is increased by EGF, HGF, FGF1 or FGF2 treatments, and slightly decreased by NGF treatment. Its function is as follows. Arginine methyltransferase that can both catalyze the formation of omega-N monomethylarginine (MMA) and symmetrical dimethylarginine (sDMA), with a preference for the formation of MMA. Specifically mediates the symmetrical dimethylation of arginine residues in the small nuclear ribonucleoproteins Sm D1 (SNRPD1) and Sm D3 (SNRPD3); such methylation being required for the assembly and biogenesis of snRNP core particles. Methylates SUPT5H and may regulate its transcriptional elongation properties. May methylate the N-terminal region of MBD2. Mono- and dimethylates arginine residues of myelin basic protein (MBP) in vitro. May play a role in cytokine-activated transduction pathways. Negatively regulates cyclin E1 promoter activity and cellular proliferation. Methylates histone H2A and H4 'Arg-3' during germ cell development. Methylates histone H3 'Arg-8', which may repress transcription. Methylates the Piwi proteins (PIWIL1, PIWIL2 and PIWIL4), methylation of Piwi proteins being required for the interaction with Tudor domain-containing proteins and subsequent localization to the meiotic nuage. Methylates RPS10. Attenuates EGF signaling through the MAPK1/MAPK3 pathway acting at 2 levels. First, monomethylates EGFR; this enhances EGFR 'Tyr-1197' phosphorylation and PTPN6 recruitment, eventually leading to reduced SOS1 phosphorylation. Second, methylates RAF1 and probably BRAF, hence destabilizing these 2 signaling proteins and reducing their catalytic activity. Required for induction of E-selectin and VCAM-1, on the endothelial cells surface at sites of inflammation. Methylates HOXA9. Methylates and regulates SRGAP2 which is involved in cell migration and differentiation. Acts as a transcriptional corepressor in CRY1-mediated repression of the core circadian component PER1 by regulating the H4R3 dimethylation at the PER1 promoter. Methylates GM130/GOLGA2, regulating Golgi ribbon formation. Methylates H4R3 in genes involved in glioblastomagenesis in a CHTOP- and/or TET1-dependent manner. Symmetrically methylates POLR2A, a modification that allows the recruitment to POLR2A of proteins including SMN1/SMN2 and SETX. This is required for resolving RNA-DNA hybrids created by RNA polymerase II, that form R-loop in transcription terminal regions, an important step in proper transcription termination. Along with LYAR, binds the promoter of gamma-globin HBG1/HBG2 and represses its expression. Symmetrically methylates NCL. Methylates p53/TP53; methylation might possibly affect p53/TP53 target gene specificity. Involved in spliceosome maturation and mRNA splicing in prophase I spermatocytes through the catalysis of the symmetrical arginine dimethylation of SNRPB (small nuclear ribonucleoprotein-associated protein) and the interaction with tudor domain-containing protein TDRD6. This Bos taurus (Bovine) protein is Protein arginine N-methyltransferase 5 (PRMT5).